The chain runs to 426 residues: MNQSAQLFSRARSVIPGGVNSPVRAFRNVDGDPFFVQSAKGAYITDADGRQLIDYIGTWGPAILGHAPQPVLDAVHAAVDRGLGYGIPAPAEVDMAEMITDMVPSVEKVRMVNSGTEATMSAIRLARGYTGRRKIIKFIGCYHGHVDSLLVAAGSGALTFGEPDSAGVPREMTQLTLTVPYNDREAVKKAFELHGSDIAAVILEPFPANAGLYFPQNDFLHFLREITLRHDTLLIFDEVMTGFRVAPGGVQQLYGITPDLTCMGKVIGGGLPVGAFGGRSEIMDCLSPLGPVYQAGTLSGNPVAMAAGLAQLRELLKGNAYERLEQLGARMEEGIREALKKHGRNYTFHRAGSMFCLFFTEEEVYNLESAQKASKKLFKSFFWNMLEQGVYFAPSPYETGFISTAHTEEDIDRTVEAVRISLSRLG.

Lys265 carries the post-translational modification N6-(pyridoxal phosphate)lysine.

The protein belongs to the class-III pyridoxal-phosphate-dependent aminotransferase family. HemL subfamily. As to quaternary structure, homodimer. Pyridoxal 5'-phosphate serves as cofactor.

The protein resides in the cytoplasm. The enzyme catalyses (S)-4-amino-5-oxopentanoate = 5-aminolevulinate. It participates in porphyrin-containing compound metabolism; protoporphyrin-IX biosynthesis; 5-aminolevulinate from L-glutamyl-tRNA(Glu): step 2/2. The protein is Glutamate-1-semialdehyde 2,1-aminomutase of Akkermansia muciniphila (strain ATCC BAA-835 / DSM 22959 / JCM 33894 / BCRC 81048 / CCUG 64013 / CIP 107961 / Muc).